Consider the following 344-residue polypeptide: Heat-inducible transcription repressor HrcA (344 aa).

Belongs to the HrcA family.

Functionally, negative regulator of class I heat shock genes (grpE-dnaK-dnaJ and groELS operons). Prevents heat-shock induction of these operons. In Streptococcus uberis (strain ATCC BAA-854 / 0140J), this protein is Heat-inducible transcription repressor HrcA.